The sequence spans 248 residues: 14-3-3-like protein 1 (248 aa).

The protein belongs to the 14-3-3 family. Interacts with daf-16 and sir-2.1. Interacts with atgl-1. Interacts with hcf-1.

The protein localises to the cytoplasm. It localises to the nucleus. In terms of biological role, required to modulate lifespan, in concert with hcf-1, acting redundantly with 14-3-3-like protein ftt-2. The protein is 14-3-3-like protein 1 (par-5) of Caenorhabditis elegans.